Here is a 689-residue protein sequence, read N- to C-terminus: tRNA wybutosine-synthesizing protein 4 (689 aa).

The segment at 1-33 (MTSTSKLDANQLARQRKKLEKDRRKKVYDDQQV) is disordered. Basic residues predominate over residues 14 to 26 (RQRKKLEKDRRKK). S-adenosyl-L-methionine is bound by residues Arg84, Gly111, Asp137, 183 to 184 (DL), and Glu215.

The protein belongs to the methyltransferase superfamily. LCMT family.

It carries out the reaction 7-[(3S)-3-amino-3-carboxypropyl]wyosine(37) in tRNA(Phe) + S-adenosyl-L-methionine = 7-[(3S)-(3-amino-3-methoxycarbonyl)propyl]wyosine(37) in tRNA(Phe) + S-adenosyl-L-homocysteine. The catalysed reaction is 7-[(3S)-(3-amino-3-methoxycarbonyl)propyl]wyosine(37) in tRNA(Phe) + S-adenosyl-L-methionine + CO2 = wybutosine(37) in tRNA(Phe) + S-adenosyl-L-homocysteine + 2 H(+). Its pathway is tRNA modification; wybutosine-tRNA(Phe) biosynthesis. Its function is as follows. Probable S-adenosyl-L-methionine-dependent methyltransferase that acts as a component of the wybutosine biosynthesis pathway. Wybutosine is a hyper modified guanosine with a tricyclic base found at the 3'-position adjacent to the anticodon of eukaryotic phenylalanine tRNA. May methylate the carboxyl group of leucine residues to form alpha-leucine ester residues. In Candida albicans (strain SC5314 / ATCC MYA-2876) (Yeast), this protein is tRNA wybutosine-synthesizing protein 4 (PPM2).